Here is a 267-residue protein sequence, read N- to C-terminus: L-erythrulose-1-phosphate isomerase (267 aa).

The active-site Electrophile is His-95. The Proton acceptor role is filled by Glu-168. Positions 174 and 211 each coordinate substrate.

It belongs to the triosephosphate isomerase family. As to quaternary structure, homodimer.

The protein localises to the cytoplasm. It carries out the reaction L-erythrulose 1-phosphate = D-erythrulose 4-phosphate. Its pathway is carbohydrate metabolism; erythritol degradation. Functionally, catalyzes the isomerization of D-erythrulose-4P to L-erythrulose-1P. This chain is L-erythrulose-1-phosphate isomerase, found in Rhizobium etli (strain ATCC 51251 / DSM 11541 / JCM 21823 / NBRC 15573 / CFN 42).